Consider the following 491-residue polypeptide: Aspartyl/glutamyl-tRNA(Asn/Gln) amidotransferase subunit B (491 aa).

This sequence belongs to the GatB/GatE family. GatB subfamily. As to quaternary structure, heterotrimer of A, B and C subunits.

The enzyme catalyses L-glutamyl-tRNA(Gln) + L-glutamine + ATP + H2O = L-glutaminyl-tRNA(Gln) + L-glutamate + ADP + phosphate + H(+). It carries out the reaction L-aspartyl-tRNA(Asn) + L-glutamine + ATP + H2O = L-asparaginyl-tRNA(Asn) + L-glutamate + ADP + phosphate + 2 H(+). Its function is as follows. Allows the formation of correctly charged Asn-tRNA(Asn) or Gln-tRNA(Gln) through the transamidation of misacylated Asp-tRNA(Asn) or Glu-tRNA(Gln) in organisms which lack either or both of asparaginyl-tRNA or glutaminyl-tRNA synthetases. The reaction takes place in the presence of glutamine and ATP through an activated phospho-Asp-tRNA(Asn) or phospho-Glu-tRNA(Gln). This Paraburkholderia phytofirmans (strain DSM 17436 / LMG 22146 / PsJN) (Burkholderia phytofirmans) protein is Aspartyl/glutamyl-tRNA(Asn/Gln) amidotransferase subunit B.